Here is a 456-residue protein sequence, read N- to C-terminus: Kynurenine 3-monooxygenase (456 aa).

This sequence belongs to the aromatic-ring hydroxylase family. KMO subfamily. FAD is required as a cofactor.

The enzyme catalyses L-kynurenine + NADPH + O2 + H(+) = 3-hydroxy-L-kynurenine + NADP(+) + H2O. It participates in cofactor biosynthesis; NAD(+) biosynthesis; quinolinate from L-kynurenine: step 1/3. In terms of biological role, catalyzes the hydroxylation of L-kynurenine (L-Kyn) to form 3-hydroxy-L-kynurenine (L-3OHKyn). Required for synthesis of quinolinic acid. This Xanthomonas campestris pv. campestris (strain 8004) protein is Kynurenine 3-monooxygenase.